We begin with the raw amino-acid sequence, 512 residues long: Maturase K (512 aa).

Belongs to the intron maturase 2 family. MatK subfamily.

It is found in the plastid. Its subcellular location is the chloroplast. Functionally, usually encoded in the trnK tRNA gene intron. Probably assists in splicing its own and other chloroplast group II introns. The sequence is that of Maturase K from Lemna gibba (Swollen duckweed).